The sequence spans 937 residues: Isoleucine--tRNA ligase (937 aa).

Residues 57–67 carry the 'HIGH' region motif; it reads PYANGPIHMGH. Glu556 lines the L-isoleucyl-5'-AMP pocket. Residues 597–601 carry the 'KMSKS' region motif; sequence KMSKS. Position 600 (Lys600) interacts with ATP. Zn(2+) is bound by residues Cys895, Cys898, Cys915, and Cys918.

The protein belongs to the class-I aminoacyl-tRNA synthetase family. IleS type 1 subfamily. In terms of assembly, monomer. The cofactor is Zn(2+).

It localises to the cytoplasm. The enzyme catalyses tRNA(Ile) + L-isoleucine + ATP = L-isoleucyl-tRNA(Ile) + AMP + diphosphate. Functionally, catalyzes the attachment of isoleucine to tRNA(Ile). As IleRS can inadvertently accommodate and process structurally similar amino acids such as valine, to avoid such errors it has two additional distinct tRNA(Ile)-dependent editing activities. One activity is designated as 'pretransfer' editing and involves the hydrolysis of activated Val-AMP. The other activity is designated 'posttransfer' editing and involves deacylation of mischarged Val-tRNA(Ile). This is Isoleucine--tRNA ligase from Levilactobacillus brevis (strain ATCC 367 / BCRC 12310 / CIP 105137 / JCM 1170 / LMG 11437 / NCIMB 947 / NCTC 947) (Lactobacillus brevis).